The chain runs to 473 residues: Alliin lyase 2 (473 aa).

Residues 1-15 form the signal peptide; it reads MICLVILTCIIMSNS. A propeptide spanning residues 16–25 is cleaved from the precursor; it reads FVNNNNMVQA. Residues 38–84 enclose the EGF-like; atypical domain; that stretch reads EAVANINCSEHGRAFLDGIISEGSPKCECNTCYTGPDCSEKIQGCSA. Asparagine 44 is a glycosylation site (N-linked (GlcNAc...) asparagine). 3 disulfide bridges follow: cysteine 45/cysteine 64, cysteine 66/cysteine 75, and cysteine 69/cysteine 82. A chloride-binding site is contributed by 117–125; that stretch reads YFFNPVSNF. N-linked (GlcNAc...) asparagine glycans are attached at residues asparagine 171 and asparagine 216. Position 276 is an N6-(pyridoxal phosphate)lysine (lysine 276). The N-linked (GlcNAc...) asparagine glycan is linked to asparagine 353. Residues cysteine 393 and cysteine 401 are joined by a disulfide bond.

The protein belongs to the alliinase family. In terms of assembly, homodimer. Pyridoxal 5'-phosphate is required as a cofactor. Glycosylated. High expression in bulbs, lower expression in leaves, and no expression in roots.

It localises to the vacuole. The catalysed reaction is an S-alkyl-L-cysteine S-oxide = an S-alkyl sulfenate + 2-aminoprop-2-enoate. It carries out the reaction alliin = allylsulfenate + 2-aminoprop-2-enoate. Able to cleave the C-S bond of sulfoxide derivatives of Cys to produce allicin, thus giving rise to all sulfur compounds which are responsible for most of the properties of garlic, such as the specific smell and flavor as well as the health benefits like blood lipid or blood pressure lowering. In Allium sativum (Garlic), this protein is Alliin lyase 2.